Consider the following 260-residue polypeptide: Hydroxyethylthiazole kinase 1 (260 aa).

Residue Met39 participates in substrate binding. Residues Arg115 and Thr160 each contribute to the ATP site. A substrate-binding site is contributed by Gly187.

The protein belongs to the Thz kinase family. The cofactor is Mg(2+).

It carries out the reaction 5-(2-hydroxyethyl)-4-methylthiazole + ATP = 4-methyl-5-(2-phosphooxyethyl)-thiazole + ADP + H(+). Its pathway is cofactor biosynthesis; thiamine diphosphate biosynthesis; 4-methyl-5-(2-phosphoethyl)-thiazole from 5-(2-hydroxyethyl)-4-methylthiazole: step 1/1. In terms of biological role, catalyzes the phosphorylation of the hydroxyl group of 4-methyl-5-beta-hydroxyethylthiazole (THZ). This Streptococcus pneumoniae serotype 2 (strain D39 / NCTC 7466) protein is Hydroxyethylthiazole kinase 1.